The chain runs to 325 residues: Hydroxylase/desaturase poxK (325 aa).

Positions 1–12 are enriched in low complexity; sequence MTATATPVPTVA. The segment at 1 to 25 is disordered; sequence MTATATPVPTVASHAQDITLPPPPK.

It belongs to the asaB hydroxylase/desaturase family.

It participates in secondary metabolite biosynthesis. Hydroxylase/desaturase; part of the gene cluster that mediates the biosynthesis of oxaleimides, cytotoxic compounds containing an unusual disubstituted succinimide moiety. The first step of the pathway is provided by the HR-PKS poxF that serves in a new mode of collaborative biosynthesis with the PKS-NRPS poxE, by providing the olefin containing amino acid substrate via the synthesis of an ACP-bound dec-4-enoate. The cytochrome P450 monooxygenase poxM-catalyzed oxidation at the alpha-position creates the enzyme-bound 2-hydroxydec-4-enoyl-ACP thioester, which may be prone to spontaneous hydrolysis to yield 2-hydroxydec-4-enoic acid due to increased electrophilicity of the carbonyl. 2-hydroxydec-4-enoic acid can then be further oxidized by poxM to yield the alpha-ketoacid 2-oxodec-4-enoicacid, which is reductively aminated by the aminotransferase poxL to yield (S,E)-2-aminodec-4-enoic acid. The Hybrid PKS-NRPS synthetase poxE then performs condensation between the octaketide product of its PKS modules and the amino group of (S,E)-2-aminodec-4-enoic acid which is activated and incorporated by the adenylation domain. The resulting aminoacyl product can be cyclized by the Diels-Alderase PoxQ and reductively released by the reductive (R) domain of poxE to yield an aldehyde intermediate. The released aldehyde is then substrate for a Knoevenagel condensation by the hydrolyase poxO followed by an oxidation at the 5-position of the pyrrolidone ring. The presence of the olefin from the amino acid building block allows for migration of the substituted allyl group to occur. This allylic transposition reaction takes place in a conjugate addition, semipinacol-like fashion to yield a succinimide intermediate. Iterative two-electron oxidations of the C7 methyl of the succinimide intermediate to the carboxylic acid can be catalyzed by one of two remaining cytochrome P450 monooxygenasess poxC or poxD to yield oxaleimide A. Subsequent oxidation yields the maleimide scaffold oxaleimide I. Both oxaleimide A and oxaleimide I can undergo oxidative modifications in the decalin ring to yield the series of products oxaleimides B to H. The chain is Hydroxylase/desaturase poxK from Penicillium oxalicum.